A 1070-amino-acid polypeptide reads, in one-letter code: DNA-directed RNA polymerase subunit beta (1070 aa).

This sequence belongs to the RNA polymerase beta chain family. In terms of assembly, in plastids the minimal PEP RNA polymerase catalytic core is composed of four subunits: alpha, beta, beta', and beta''. When a (nuclear-encoded) sigma factor is associated with the core the holoenzyme is formed, which can initiate transcription.

It localises to the plastid. The protein localises to the chloroplast. It carries out the reaction RNA(n) + a ribonucleoside 5'-triphosphate = RNA(n+1) + diphosphate. In terms of biological role, DNA-dependent RNA polymerase catalyzes the transcription of DNA into RNA using the four ribonucleoside triphosphates as substrates. The chain is DNA-directed RNA polymerase subunit beta from Nicotiana tomentosiformis (Tobacco).